Consider the following 510-residue polypeptide: Histone deacetylase 3 (510 aa).

Residues 24-338 (RRVCYFYDPE…WCYETGVALG (315 aa)) are histone deacetylase. Histidine 158 serves as the catalytic Proton donor/acceptor. 3 residues coordinate Zn(2+): aspartate 193, histidine 195, and aspartate 281. The interval 394–510 (PSVQFQERIP…ARNEPGSSPK (117 aa)) is disordered. Composition is skewed to basic and acidic residues over residues 418-434 (DERH…DHKP) and 448-472 (VKRE…HKGP). Low complexity predominate over residues 485-503 (APTADANAVAVNAPGNARN).

Belongs to the histone deacetylase family. HD Type 1 subfamily. The cofactor is Zn(2+). As to expression, expressed in roots.

The protein resides in the nucleus. The enzyme catalyses N(6)-acetyl-L-lysyl-[histone] + H2O = L-lysyl-[histone] + acetate. Responsible for the deacetylation of lysine residues on the N-terminal part of the core histones (H2A, H2B, H3 and H4). Histone deacetylation gives a tag for epigenetic repression and plays an important role in transcriptional regulation, cell cycle progression and developmental events. Histone deacetylases act via the formation of large multiprotein complexes. This is Histone deacetylase 3 from Oryza sativa subsp. japonica (Rice).